The sequence spans 348 residues: Beta-hexosaminidase (348 aa).

Residues aspartate 64, arginine 72, arginine 138, and 168 to 169 (KH) contribute to the substrate site. The active-site Proton donor/acceptor is histidine 181. The active-site Nucleophile is the aspartate 252.

The protein belongs to the glycosyl hydrolase 3 family. NagZ subfamily.

The protein localises to the cytoplasm. The catalysed reaction is Hydrolysis of terminal non-reducing N-acetyl-D-hexosamine residues in N-acetyl-beta-D-hexosaminides.. The protein operates within cell wall biogenesis; peptidoglycan recycling. Functionally, plays a role in peptidoglycan recycling by cleaving the terminal beta-1,4-linked N-acetylglucosamine (GlcNAc) from peptide-linked peptidoglycan fragments, giving rise to free GlcNAc, anhydro-N-acetylmuramic acid and anhydro-N-acetylmuramic acid-linked peptides. The polypeptide is Beta-hexosaminidase (Alkalilimnicola ehrlichii (strain ATCC BAA-1101 / DSM 17681 / MLHE-1)).